The chain runs to 319 residues: L-lactate dehydrogenase 2 (319 aa).

NAD(+) contacts are provided by residues Val16, Asp37, Lys42, Tyr68, and 82–83 (GA). Residues Gln85 and Arg91 each coordinate substrate. Residues Ser104, 121–123 (AAN), and Ser146 each bind NAD(+). 123 to 126 (NPVD) is a binding site for substrate. Residue 151-154 (DSAR) coordinates substrate. His178 functions as the Proton acceptor in the catalytic mechanism. Residue Tyr222 is modified to Phosphotyrosine. A substrate-binding site is contributed by Thr231.

This sequence belongs to the LDH/MDH superfamily. LDH family. In terms of assembly, homotetramer.

The protein resides in the cytoplasm. It carries out the reaction (S)-lactate + NAD(+) = pyruvate + NADH + H(+). It participates in fermentation; pyruvate fermentation to lactate; (S)-lactate from pyruvate: step 1/1. In terms of biological role, catalyzes the conversion of lactate to pyruvate (Potential). Contributes to S.aureus growth during nitrosative stress in both aerobically and anaerobically cultured cells, despite playing a secondary role in this resistance mechanism. This is L-lactate dehydrogenase 2 from Staphylococcus aureus (strain Mu3 / ATCC 700698).